The following is a 171-amino-acid chain: 3-hydroxydecanoyl-[acyl-carrier-protein] dehydratase (171 aa).

His70 is a catalytic residue.

It belongs to the thioester dehydratase family. FabA subfamily. In terms of assembly, homodimer.

It is found in the cytoplasm. It catalyses the reaction a (3R)-hydroxyacyl-[ACP] = a (2E)-enoyl-[ACP] + H2O. The catalysed reaction is (3R)-hydroxydecanoyl-[ACP] = (2E)-decenoyl-[ACP] + H2O. It carries out the reaction (2E)-decenoyl-[ACP] = (3Z)-decenoyl-[ACP]. It participates in lipid metabolism; fatty acid biosynthesis. In terms of biological role, necessary for the introduction of cis unsaturation into fatty acids. Catalyzes the dehydration of (3R)-3-hydroxydecanoyl-ACP to E-(2)-decenoyl-ACP and then its isomerization to Z-(3)-decenoyl-ACP. Can catalyze the dehydratase reaction for beta-hydroxyacyl-ACPs with saturated chain lengths up to 16:0, being most active on intermediate chain length. In Xanthomonas oryzae pv. oryzae (strain MAFF 311018), this protein is 3-hydroxydecanoyl-[acyl-carrier-protein] dehydratase.